The sequence spans 349 residues: Polyamine aminopropyltransferase 2 (349 aa).

The PABS domain occupies 29 to 267; that stretch reads DGAITAIEDS…SSWGFLLASD (239 aa). S-methyl-5'-thioadenosine is bound at residue glutamine 60. 2 residues coordinate spermidine: histidine 91 and glutamate 115. S-methyl-5'-thioadenosine contacts are provided by residues aspartate 135 and 167–168; that span reads DG. Aspartate 185 serves as the catalytic Proton acceptor. Proline 194 provides a ligand contact to S-methyl-5'-thioadenosine.

Belongs to the spermidine/spermine synthase family. Homodimer or homotetramer.

The protein localises to the cytoplasm. It carries out the reaction S-adenosyl 3-(methylsulfanyl)propylamine + putrescine = S-methyl-5'-thioadenosine + spermidine + H(+). It participates in amine and polyamine biosynthesis; spermidine biosynthesis; spermidine from putrescine: step 1/1. Its function is as follows. Catalyzes the irreversible transfer of a propylamine group from the amino donor S-adenosylmethioninamine (decarboxy-AdoMet) to putrescine (1,4-diaminobutane) to yield spermidine. In Pseudomonas aeruginosa (strain ATCC 15692 / DSM 22644 / CIP 104116 / JCM 14847 / LMG 12228 / 1C / PRS 101 / PAO1), this protein is Polyamine aminopropyltransferase 2.